The primary structure comprises 605 residues: Elongation factor 4 (605 aa).

Positions 11 to 193 (KRIRNFSIIA…QIVTRISPPQ (183 aa)) constitute a tr-type G domain. GTP-binding positions include 23 to 28 (DHGKST) and 140 to 143 (NKVD).

The protein belongs to the TRAFAC class translation factor GTPase superfamily. Classic translation factor GTPase family. LepA subfamily.

It localises to the cell membrane. The catalysed reaction is GTP + H2O = GDP + phosphate + H(+). In terms of biological role, required for accurate and efficient protein synthesis under certain stress conditions. May act as a fidelity factor of the translation reaction, by catalyzing a one-codon backward translocation of tRNAs on improperly translocated ribosomes. Back-translocation proceeds from a post-translocation (POST) complex to a pre-translocation (PRE) complex, thus giving elongation factor G a second chance to translocate the tRNAs correctly. Binds to ribosomes in a GTP-dependent manner. This chain is Elongation factor 4, found in Onion yellows phytoplasma (strain OY-M).